Consider the following 862-residue polypeptide: Dipeptidyl peptidase 9 (862 aa).

Active-site charge relay system residues include Ser-729, Asp-807, and His-839. Val-boroPro is bound at residue Ser-729.

Belongs to the peptidase S9B family. DPPIV subfamily. Homodimer. Forms a ternary complex with NLRP1, composed of a DPP9 homodimer, one full-length NLRP1 protein, and one cleaved C-terminus of NLRP1 (NACHT, LRR and PYD domains-containing protein 1, C-terminus). Forms a ternary complex with CARD8, composed of a DPP9 homodimer, one full-length NLRP1 protein, and one cleaved C-terminus of CARD8 (Caspase recruitment domain-containing protein 8, C-terminus). In the ternary complex, only one subunit of the DPP9 homodimer is bound to NLRP1 or CARD8. In terms of tissue distribution, detected in kidney, skin, brain, thymus and liver (at protein level).

It is found in the cytoplasm. The protein localises to the cytosol. It carries out the reaction Release of an N-terminal dipeptide, Xaa-Yaa-|-Zaa-, from a polypeptide, preferentially when Yaa is Pro, provided Zaa is neither Pro nor hydroxyproline.. With respect to regulation, inhibited by the serine proteinase inhibitor 4-(2-aminoethyl)benzenesulphonyl fluoride (AEBSF), and by di-isopropylfluorophosphate. Inhibited by Val-boroPro (Talabostat, PT-100), a non-selective inhibitor, which triggers pyroptosis in monocytes and macrophages. Val-boroPro inhibits activity by binding to the active site, mimicking a substrate-bound state, thereby displacing the C-terminal fragment of NLRP1, leading to activation of the NLRP1 inflammasome. In contrast, Val-boroPro does not directly displaces CARD8: it acts by promoting degradation of the N-terminal part of CARD8, leading to indirect disruption of the ternary complex. Functionally, dipeptidyl peptidase that cleaves off N-terminal dipeptides from proteins having a Pro or Ala residue at position 2. Acts as a key inhibitor of caspase-1-dependent monocyte and macrophage pyroptosis in resting cells by preventing activation of NLRP1 and CARD8. Sequesters the cleaved C-terminal part of NLRP1 and CARD8, which respectively constitute the active part of the NLRP1 and CARD8 inflammasomes, in a ternary complex, thereby preventing their oligomerization and activation. The dipeptidyl peptidase activity is required to suppress NLRP1 and CARD8; however, neither NLRP1 nor CARD8 are bona fide substrates of DPP9, suggesting the existence of substrate(s) required for NLRP1 and CARD8 inhibition. This Mus musculus (Mouse) protein is Dipeptidyl peptidase 9.